The sequence spans 763 residues: Sphingoid long-chain bases kinase 1 (763 aa).

Residues 34–81 (TGGSQQSSPIVFPEKRNKKVKASSRRGEVTNDPQVKPKPDEHRIDIGG) are disordered. Residues 58-81 (RRGEVTNDPQVKPKPDEHRIDIGG) are compositionally biased toward basic and acidic residues. Positions 245 to 384 (KSAPKMLVIL…TDVFAVEWIH (140 aa)) constitute a DAGKc domain. ATP contacts are provided by residues 255 to 257 (NPR) and Thr287. Residue 313 to 316 (GGDG) participates in substrate binding. Catalysis depends on Asp315, which acts as the Proton donor/acceptor. ATP is bound by residues Glu320, 345–347 (GSD), and Arg418. The tract at residues 561–603 (MGLTSVQDPPTRCSWGNTGGQDREDISSTVSDPGPIWDAGPKW) is disordered. 733–735 (DGE) contributes to the ATP binding site.

Expressed in roots, stems, leaves and at higher levels in flowers.

Involved in the production of sphingolipid metabolites. Active on sphingosine, phytosphingosine (PHS, 4-hydroxysphinganine), D-erythro-dihydrosphingosine, D-erythro-sphingosine and trans-4, trans-8-sphingadienine, an LCB found exclusively in plants, but not on N-acetyl-dihydrosphingosine (C2-dihydroceramide) and D-threo-dihydrosphingosine. This Arabidopsis thaliana (Mouse-ear cress) protein is Sphingoid long-chain bases kinase 1 (LCBK1).